The primary structure comprises 1005 residues: Beta/gamma crystallin domain-containing protein 3 (1005 aa).

S122, S129, S130, S136, and S140 each carry phosphoserine. Disordered stretches follow at residues 132 to 159 (EDVLSSEVSPGHHGSSKSRESANQPSSV) and 173 to 198 (NFDGDDRQEAEEEEEEAVASGKDWRT). The span at 180 to 189 (QEAEEEEEEA) shows a compositional bias: acidic residues. 9 consecutive Beta/gamma crystallin 'Greek key' domains span residues 367–416 (GCWI…KRVL), 462–500 (GVWLAYPDIHFKGQATILEEDQGLFEISAAEMKSLHPLQ), 512–556 (LKVI…RVIG), 557–599 (GVWV…RYLQ), 605–647 (SSIT…HVKS), 648–690 (GVWV…RPIQ), 701–737 (HLLKAFSKAGFQGECIDFVKECADLTSFTPASFKVLR), 738–781 (GCWL…QPID), and 828–869 (GLWI…RPMK). The Ricin B-type lectin domain occupies 871–1003 (PAVYIRIRNR…GEETQKWDIE (133 aa)).

This sequence belongs to the beta/gamma-crystallin family.

The chain is Beta/gamma crystallin domain-containing protein 3 (Crybg3) from Mus musculus (Mouse).